Consider the following 503-residue polypeptide: Glutamate--tRNA ligase (503 aa).

Residues 12–22 (PSPTGYLHVGG) carry the 'HIGH' region motif. The short motif at 259-263 (KLSKR) is the 'KMSKS' region element. Position 262 (lysine 262) interacts with ATP.

The protein belongs to the class-I aminoacyl-tRNA synthetase family. Glutamate--tRNA ligase type 1 subfamily. As to quaternary structure, monomer.

The protein resides in the cytoplasm. It catalyses the reaction tRNA(Glu) + L-glutamate + ATP = L-glutamyl-tRNA(Glu) + AMP + diphosphate. Catalyzes the attachment of glutamate to tRNA(Glu) in a two-step reaction: glutamate is first activated by ATP to form Glu-AMP and then transferred to the acceptor end of tRNA(Glu). The protein is Glutamate--tRNA ligase of Chlorobaculum parvum (strain DSM 263 / NCIMB 8327) (Chlorobium vibrioforme subsp. thiosulfatophilum).